The following is a 297-amino-acid chain: Protease HtpX homolog (297 aa).

The next 2 membrane-spanning stretches (helical) occupy residues 14–34 (IVLLFVFFILVALVGAAVGYL) and 38–58 (SLETGVVAAIVIGAIYTIIMV). His-144 is a Zn(2+) binding site. Glu-145 is an active-site residue. Zn(2+) is bound at residue His-148. Transmembrane regions (helical) follow at residues 159-179 (IALALAAAITLLTNIGGNWWF) and 199-219 (ILLLVFSILMMVLAPLAAAAI). Glu-228 is a Zn(2+) binding site.

Belongs to the peptidase M48B family. Zn(2+) is required as a cofactor.

The protein resides in the cell membrane. This chain is Protease HtpX homolog, found in Leuconostoc mesenteroides subsp. mesenteroides (strain ATCC 8293 / DSM 20343 / BCRC 11652 / CCM 1803 / JCM 6124 / NCDO 523 / NBRC 100496 / NCIMB 8023 / NCTC 12954 / NRRL B-1118 / 37Y).